A 479-amino-acid chain; its full sequence is Ribosomal RNA small subunit methyltransferase F (479 aa).

S-adenosyl-L-methionine is bound by residues 125-131, Glu149, Gly177, and Asp194; that span reads AAAPGSK. The active-site Nucleophile is the Cys247.

It belongs to the class I-like SAM-binding methyltransferase superfamily. RsmB/NOP family.

It localises to the cytoplasm. The catalysed reaction is cytidine(1407) in 16S rRNA + S-adenosyl-L-methionine = 5-methylcytidine(1407) in 16S rRNA + S-adenosyl-L-homocysteine + H(+). Its function is as follows. Specifically methylates the cytosine at position 1407 (m5C1407) of 16S rRNA. This chain is Ribosomal RNA small subunit methyltransferase F, found in Shigella flexneri serotype 5b (strain 8401).